The primary structure comprises 198 residues: Recombination protein RecR (198 aa).

A C4-type zinc finger spans residues 58 to 73; sequence CSICGNYTDSDPCAIC. A Toprim domain is found at 81 to 175; the sequence is SIICVIEQPK…KVTRIAHGVP (95 aa).

The protein belongs to the RecR family.

Its function is as follows. May play a role in DNA repair. It seems to be involved in an RecBC-independent recombinational process of DNA repair. It may act with RecF and RecO. In Clostridium novyi (strain NT), this protein is Recombination protein RecR.